Reading from the N-terminus, the 143-residue chain is MSHDSDDKTFPYQKDDAELRRRLTPMQYEVTQHAATERAFTGEYTDTEDAGIYKCVVCSTPLFESGAKFHSGCGWPSYFKPLNGEVIDEKIDYSHGMVRVEVRCNHCGAHLGHVFEDGPRDKTGLRYCINSAALNFESRPENE.

One can recognise a MsrB domain in the interval 16-139 (DAELRRRLTP…NSAALNFESR (124 aa)). The Zn(2+) site is built by C55, C58, C104, and C107. The active-site Nucleophile is C128.

The protein belongs to the MsrB Met sulfoxide reductase family. Requires Zn(2+) as cofactor.

It carries out the reaction L-methionyl-[protein] + [thioredoxin]-disulfide + H2O = L-methionyl-(R)-S-oxide-[protein] + [thioredoxin]-dithiol. This is Peptide methionine sulfoxide reductase MsrB from Burkholderia cenocepacia (strain ATCC BAA-245 / DSM 16553 / LMG 16656 / NCTC 13227 / J2315 / CF5610) (Burkholderia cepacia (strain J2315)).